We begin with the raw amino-acid sequence, 263 residues long: Methylesterase 1 (263 aa).

The active-site Acyl-ester intermediate is S85. Catalysis depends on charge relay system residues D213 and H241.

This sequence belongs to the AB hydrolase superfamily. Methylesterase family.

It carries out the reaction methyl (indol-3-yl)acetate + H2O = (indol-3-yl)acetate + methanol + H(+). The catalysed reaction is methyl (-)-jasmonate + H2O = jasmonate + methanol + H(+). The enzyme catalyses methyl salicylate + H2O = salicylate + methanol + H(+). The protein operates within plant hormone biosynthesis. It functions in the pathway lipid metabolism; oxylipin biosynthesis. With respect to regulation, esterase activity is down-regulated by salicylic acid (SA). Its function is as follows. Methylesterase shown to have carboxylesterase activity, methyl indole-3-acetic acid (MeIAA) esterase activity, methyl salicylate (MeSA) esterase activity and methyl jasmonate (MeJA) esterase activity in vitro. Required to convert methyl salicylate (MeSA) to salicylic acid (SA) as part of the signal transduction pathways that activate systemic acquired resistance in systemic tissue. MeSA is believed to be an inactive form that needs to be demethylated to exert a biological effect. The polypeptide is Methylesterase 1 (Arabidopsis thaliana (Mouse-ear cress)).